The primary structure comprises 160 residues: uncharacterized protein (160 aa).

Zn(2+) contacts are provided by cysteine 26, cysteine 28, cysteine 50, and histidine 61. The GRF-type; atypical zinc finger occupies 26–69; that stretch reads CWCGEEIITFTSKTKENPYRRFYRCAIAMKRENEEHLFKWVDEA.

This is an uncharacterized protein from Arabidopsis thaliana (Mouse-ear cress).